A 351-amino-acid polypeptide reads, in one-letter code: Peptide chain release factor 1 (351 aa).

Position 229 is an N5-methylglutamine (Q229).

It belongs to the prokaryotic/mitochondrial release factor family. In terms of processing, methylated by PrmC. Methylation increases the termination efficiency of RF1.

It is found in the cytoplasm. Peptide chain release factor 1 directs the termination of translation in response to the peptide chain termination codons UAG and UAA. The sequence is that of Peptide chain release factor 1 from Cereibacter sphaeroides (strain KD131 / KCTC 12085) (Rhodobacter sphaeroides).